The primary structure comprises 326 residues: Balbiani ring protein 1 (326 aa).

Residues 1–33 (PSKSGPRPSKSGPRPSKSGPRPSKSGPRPSKSG) show a composition bias toward low complexity. Residues 1–119 (PSKSGPRPSK…RESPVCDDAM (119 aa)) form a disordered region. Positions 34–51 (PRPEKCGSAMRKAEAEKC) are enriched in basic and acidic residues. A compositionally biased stretch (low complexity) spans 93–102 (VTPTPEVPTT). Basic and acidic residues predominate over residues 107–119 (SESRESPVCDDAM).

As to expression, salivary gland.

The protein localises to the secreted. Functionally, used by the larvae to construct a supramolecular structure, the larval tube. This is Balbiani ring protein 1 (BR1) from Chironomus pallidivittatus (Midge).